The chain runs to 156 residues: 3-hydroxyacyl-[acyl-carrier-protein] dehydratase FabZ (156 aa).

The active site involves histidine 61.

This sequence belongs to the thioester dehydratase family. FabZ subfamily.

Its subcellular location is the cytoplasm. The catalysed reaction is a (3R)-hydroxyacyl-[ACP] = a (2E)-enoyl-[ACP] + H2O. In terms of biological role, involved in unsaturated fatty acids biosynthesis. Catalyzes the dehydration of short chain beta-hydroxyacyl-ACPs and long chain saturated and unsaturated beta-hydroxyacyl-ACPs. This is 3-hydroxyacyl-[acyl-carrier-protein] dehydratase FabZ from Acaryochloris marina (strain MBIC 11017).